Reading from the N-terminus, the 447-residue chain is Biotin carboxylase (447 aa).

The Biotin carboxylation domain occupies 1 to 447 (MKFDKILIAN…STSFVQEMNK (447 aa)). ATP contacts are provided by residues K117, K159, 165 to 166 (GG), 201 to 204 (EKFI), and H209. Positions 121-318 (KETMQKAGVP…LLVEQIRIAQ (198 aa)) constitute an ATP-grasp domain. K238 serves as a coordination point for hydrogencarbonate. ATP is bound by residues E276 and E289. Residues E276, E289, and N291 each coordinate Mg(2+). Positions 276, 289, and 291 each coordinate Mn(2+). Hydrogencarbonate contacts are provided by R293, V296, and R339. R293 is a catalytic residue. A biotin-binding site is contributed by R339.

Acetyl-CoA carboxylase is a heterohexamer of biotin carboxyl carrier protein, biotin carboxylase and the two subunits of carboxyl transferase in a 2:2 complex. The cofactor is Mg(2+). It depends on Mn(2+) as a cofactor.

The enzyme catalyses N(6)-biotinyl-L-lysyl-[protein] + hydrogencarbonate + ATP = N(6)-carboxybiotinyl-L-lysyl-[protein] + ADP + phosphate + H(+). Its pathway is lipid metabolism; malonyl-CoA biosynthesis; malonyl-CoA from acetyl-CoA: step 1/1. Its function is as follows. This protein is a component of the acetyl coenzyme A carboxylase complex; first, biotin carboxylase catalyzes the carboxylation of the carrier protein and then the transcarboxylase transfers the carboxyl group to form malonyl-CoA. This is Biotin carboxylase (accC) from Nostoc sp. (strain PCC 7120 / SAG 25.82 / UTEX 2576).